A 700-amino-acid chain; its full sequence is Glycine--tRNA ligase beta subunit (700 aa).

Belongs to the class-II aminoacyl-tRNA synthetase family. As to quaternary structure, tetramer of two alpha and two beta subunits.

It is found in the cytoplasm. The catalysed reaction is tRNA(Gly) + glycine + ATP = glycyl-tRNA(Gly) + AMP + diphosphate. This is Glycine--tRNA ligase beta subunit from Janthinobacterium sp. (strain Marseille) (Minibacterium massiliensis).